The chain runs to 452 residues: Netrin-5 (452 aa).

Residues 1-34 (MTDYRTLFSSPGAGSTVTTPITLSLLLLLSQATS) form the signal peptide. 11 disulfides stabilise this stretch: Cys-173/Cys-182, Cys-175/Cys-191, Cys-193/Cys-202, Cys-205/Cys-225, Cys-228/Cys-240, Cys-230/Cys-247, Cys-249/Cys-258, Cys-261/Cys-275, Cys-298/Cys-376, Cys-302/Cys-378, and Cys-317/Cys-438. 2 Laminin EGF-like domains span residues 173–227 (CQCH…PCLP) and 228–277 (CQCH…PCQR). Residues 298-438 (CQGYCNVSVS…LQQKERGGAC (141 aa)) enclose the NTR domain. An N-linked (GlcNAc...) asparagine glycan is attached at Asn-303.

Its subcellular location is the secreted. In terms of biological role, plays a role in neurogenesis. Prevents motor neuron cell body migration out of the neural tube. The sequence is that of Netrin-5 (Ntn5) from Mus musculus (Mouse).